The chain runs to 366 residues: Palmitoyltransferase ZDHHC2 (366 aa).

Residues 1-15 (MAPSGPGGVRRRCRR) are Cytoplasmic-facing. The helical transmembrane segment at 16–36 (VLYWIPVVFISLLLGWSYYAY) threads the bilayer. The Lumenal segment spans residues 37-47 (AIQLCIVSMEN). The helical transmembrane segment at 48–68 (IGEQVVCLMAYHLLFAMFVWS) threads the bilayer. Topologically, residues 69–169 (YWKTIFTLPM…NNCVGFSNYK (101 aa)) are cytoplasmic. One can recognise a DHHC domain in the interval 126–176 (RYCDRCRLIKPDRCHHCSVCDKCILKMDHHCPWVNNCVGFSNYKFFLLFLA). C156 serves as the catalytic S-palmitoyl cysteine intermediate. The chain crosses the membrane as a helical span at residues 170–190 (FFLLFLAYSLLYCLFIAATDL). The Lumenal portion of the chain corresponds to 191–207 (QYFIRFWTNGLPDTQAK). Residues 208–228 (FHIMFLFFAAAMFSVSLSSLF) traverse the membrane as a helical segment. The Cytoplasmic portion of the chain corresponds to 229–366 (GYHCWLVSKN…NPALTMENET (138 aa)). 2 stretches are compositionally biased toward polar residues: residues 297–316 (VNQD…TAKN) and 332–349 (SHLL…SNSG). Positions 297-366 (VNQDPEQPST…NPALTMENET (70 aa)) are disordered. The tract at residues 298–366 (NQDPEQPSTP…NPALTMENET (69 aa)) is mediates localization to plasma membrane and recycling endosomes. The short motif at 334–335 (LL) is the Non-canonical dileucine endocytic signal element. The NPxY-like endocytic signal motif lies at 357–360 (NPAL).

Belongs to the DHHC palmitoyltransferase family. In terms of assembly, monomer. Homodimer. The monomeric form has a higher catalytic activity. Post-translationally, autopalmitoylated.

The protein resides in the postsynaptic density. It localises to the postsynaptic recycling endosome membrane. It is found in the cell membrane. Its subcellular location is the endoplasmic reticulum membrane. The protein localises to the golgi apparatus membrane. It carries out the reaction L-cysteinyl-[protein] + hexadecanoyl-CoA = S-hexadecanoyl-L-cysteinyl-[protein] + CoA. It catalyses the reaction L-cysteinyl-[protein] + tetradecanoyl-CoA = S-tetradecanoyl-L-cysteinyl-[protein] + CoA. The catalysed reaction is L-cysteinyl-[protein] + octadecanoyl-CoA = S-octadecanoyl-L-cysteinyl-[protein] + CoA. In terms of biological role, palmitoyltransferase that catalyzes the addition of palmitate onto various protein substrates and is involved in a variety of cellular processes. Has no stringent fatty acid selectivity and in addition to palmitate can also transfer onto target proteins myristate from tetradecanoyl-CoA and stearate from octadecanoyl-CoA. In the nervous system, plays a role in long term synaptic potentiation by palmitoylating AKAP5 through which it regulates protein trafficking from the dendritic recycling endosomes to the plasma membrane and controls both structural and functional plasticity at excitatory synapses. In dendrites, mediates the palmitoylation of DLG4 when synaptic activity decreases and induces synaptic clustering of DLG4 and associated AMPA-type glutamate receptors. Also mediates the de novo and turnover palmitoylation of RGS7BP, a shuttle for Gi/o-specific GTPase-activating proteins/GAPs, promoting its localization to the plasma membrane in response to the activation of G protein-coupled receptors. Through the localization of these GTPase-activating proteins/GAPs, it also probably plays a role in G protein-coupled receptors signaling in neurons. Also probably plays a role in cell adhesion by palmitoylating CD9 and CD151 to regulate their expression and function. Palmitoylates the endoplasmic reticulum protein CKAP4 and regulates its localization to the plasma membrane. Could also palmitoylate LCK and regulate its localization to the plasma membrane. The sequence is that of Palmitoyltransferase ZDHHC2 from Rattus norvegicus (Rat).